Reading from the N-terminus, the 585-residue chain is Formate--tetrahydrofolate ligase (585 aa).

74–81 (TPLGEGKT) is a binding site for ATP.

Belongs to the formate--tetrahydrofolate ligase family.

It catalyses the reaction (6S)-5,6,7,8-tetrahydrofolate + formate + ATP = (6R)-10-formyltetrahydrofolate + ADP + phosphate. It participates in one-carbon metabolism; tetrahydrofolate interconversion. This chain is Formate--tetrahydrofolate ligase, found in Yersinia enterocolitica serotype O:8 / biotype 1B (strain NCTC 13174 / 8081).